The sequence spans 224 residues: Lipoprotein-releasing system ATP-binding protein LolD (224 aa).

The 221-residue stretch at Tyr-4–Glu-224 folds into the ABC transporter domain. ATP is bound at residue Gly-40–Thr-47.

This sequence belongs to the ABC transporter superfamily. Lipoprotein translocase (TC 3.A.1.125) family. The complex is composed of two ATP-binding proteins (LolD) and two transmembrane proteins (LolC and LolE).

It is found in the cell inner membrane. Its function is as follows. Part of the ABC transporter complex LolCDE involved in the translocation of mature outer membrane-directed lipoproteins, from the inner membrane to the periplasmic chaperone, LolA. Responsible for the formation of the LolA-lipoprotein complex in an ATP-dependent manner. This chain is Lipoprotein-releasing system ATP-binding protein LolD, found in Desulfotalea psychrophila (strain LSv54 / DSM 12343).